The sequence spans 329 residues: Mitochondrial glycine transporter (329 aa).

3 Solcar repeats span residues 19–103 (SKTT…LRQP), 130–214 (LSNW…LKRH), and 232–316 (SSSS…LILR). 6 helical membrane-spanning segments follow: residues 25–50 (FAAG…TRVQ), 78–104 (GTLP…RQPL), 136–161 (LGTG…VRYE), 189–212 (GFGA…EQLK), 236–262 (INFI…KTRL), and 291–309 (GLGL…AWTV).

Belongs to the mitochondrial carrier (TC 2.A.29) family. SLC25A38 subfamily.

It is found in the mitochondrion inner membrane. It catalyses the reaction glycine(in) = glycine(out). Functionally, mitochondrial glycine transporter that imports glycine into the mitochondrial matrix. Plays an important role in providing glycine for the first enzymatic step in heme biosynthesis, the condensation of glycine with succinyl-CoA to produce 5-aminolevulinate (ALA) in the mitochondrial matrix. The protein is Mitochondrial glycine transporter of Aspergillus terreus (strain NIH 2624 / FGSC A1156).